A 1193-amino-acid polypeptide reads, in one-letter code: K(+) efflux antiporter 1, chloroplastic (1193 aa).

The N-terminal 49 residues, 1–49 (MEYASTFQRPILFHGGDGASYCFPNRLISPKGISITSGDSKVHSCFRLR), are a transit peptide targeting the chloroplast. The Stromal portion of the chain corresponds to 50–585 (RNVAQSGTLN…MIPHQEVNEE (536 aa)). The segment at 103–135 (SLGNADSNDHRIGESSESSDETEATDLKDARVE) is disordered. The stretch at 131-355 (DARVENDTDS…RAEKSLSISQ (225 aa)) forms a coiled coil. Lys168 carries the N6-acetyllysine; by NSI modification. The span at 351–364 (LSISQTPEETQGQL) shows a compositional bias: polar residues. 2 disordered regions span residues 351–372 (LSISQTPEETQGQLSDEETSQE) and 421–474 (QPYE…NSPK). Over residues 439–465 (KVVEADSEKPKINVQTKKQETQKDLPK) the composition is skewed to basic and acidic residues. Residues 586–606 (EASLFDFLWLLLASVIFVPLF) traverse the membrane as a helical segment. The Chloroplast intermembrane segment spans residues 607-612 (QKIPGG). Residues 613–633 (SPVLGYLAAGILIGPYGLSII) form a helical membrane-spanning segment. The Stromal segment spans residues 634–640 (RNVHGTR). A helical membrane pass occupies residues 641–661 (AIAEFGVVFLLFNIGLELSVE). The Chloroplast intermembrane portion of the chain corresponds to 662–668 (RLSSMKK). Residues 669–689 (YVFGLGSAQVLVTAAVVGLLA) traverse the membrane as a helical segment. Residues 690–698 (HYVAGQAGP) lie on the Stromal side of the membrane. Residues 699 to 719 (AAIVIGNGLALSSTAVVLQVL) traverse the membrane as a helical segment. The Chloroplast intermembrane segment spans residues 720–733 (QERGESTSRHGRAS). The helical transmembrane segment at 734–754 (FSVLLFQDLAVVVLLILIPLI) threads the bilayer. Residues 755-766 (SPNSSKGGIGFQ) are Stromal-facing. Residues 767 to 787 (AIAEALGLAAVKAAVAITAII) form a helical membrane-spanning segment. Residues 788 to 827 (AGGRLLLRPIYKQIAENRNAEIFSANTLLVILGTSLLTAR) lie on the Chloroplast intermembrane side of the membrane. The helical transmembrane segment at 828–848 (AGLSMALGAFLAGLLLAETEF) threads the bilayer. The Stromal portion of the chain corresponds to 849–860 (SLQVESDIAPYR). The chain crosses the membrane as a helical span at residues 861–881 (GLLLGLFFMTVGMSIDPKLLL). Over 882–883 (SN) the chain is Chloroplast intermembrane. The chain crosses the membrane as a helical span at residues 884–904 (FPVIVGTLGLLIVGKTMLVVI). The Stromal segment spans residues 905–912 (MGKLFGIS). The helical transmembrane segment at 913–933 (IISAIRVGLLLAPGGEFAFVA) threads the bilayer. Residues 934-948 (FGEAVNQGIMSPQLS) lie on the Chloroplast intermembrane side of the membrane. The chain crosses the membrane as a helical span at residues 949-969 (SLLFLVVGISMAITPWLAAGG). Over 970–1193 (QLIASRFELH…QIIEGGTVVI (224 aa)) the chain is Stromal. One can recognise an RCK N-terminal domain in the interval 995–1112 (QGHIIICGFG…EKAGATAVVP (118 aa)). Positions 1165 to 1184 (GYSRTSKPKPQPSDASGDNQ) are disordered.

Belongs to the monovalent cation:proton antiporter 2 (CPA2) transporter (TC 2.A.37) family. KEA (TC 2.A.37.1) subfamily. In terms of processing, acetylated at Lys-168 by the stromal acetyltransferase enzyme NSI. Expressed in shoots and roots. Mainly localized to leaf veins, hypocotyls, mesophylls and guard cells. Accumulates at high levels in small and dividing plastids (at protein level).

It is found in the plastid. Its subcellular location is the chloroplast inner membrane. The enzyme catalyses K(+)(in) + H(+)(out) = K(+)(out) + H(+)(in). With respect to regulation, repressed by sodium ions Na(+). Functionally, electroneutral K(+)/H(+) efflux antiporter involved in chloroplastic K(+) homeostasis and osmotic adjustment, especially during plastid division and thylakoid membrane formation. Collaboratively with KEA2, adjusts alkaline stromal pH upon light to dark transitions in plastids. Together with KEA2, critical for chloroplast development, including chloroplast RNA-metabolism (e.g. rRNA maturation, polysome loading and RNA-protein interactions) and plastid gene expression (PGE), ion homeostasis, and photosynthesis. Contributes, during early seedling development, to the regulation of photosynthesis and abscisic acid- (ABA-) mediated primary root growth in a sucrose-dependent manner. Involved in the regulation of reactive oxygen and nitrogen species (ROS and RNS) metabolism. Required in roots for rapid hyperosmotic-induced Ca(2+) responses and for osmo-sensory potentiation in hyperosmotic conditions. May counteract resilience to drought and salt stress, involving photorespiratory pathway and stomata closure. The sequence is that of K(+) efflux antiporter 1, chloroplastic from Arabidopsis thaliana (Mouse-ear cress).